Here is an 875-residue protein sequence, read N- to C-terminus: MPSAGSVNAANPAVDTSAQTGRYDPTALEQRWQESWKADGVDTTEVGGEKPGFFALSMFPYPSGSLHMGHVRNYVITDVIARVQRMLGHAVLHPMGWDAFGLPAENAAIERNVDPGEWTDRNIDQMRAQLDRLGLSIDWSREQATCHSDYYRWTQWLFLELLEGGLAYRKNATVNWDPVDQTVLANEQVDGDGRSWRSGALVEQRQLNQWFLRITDYAEPLLNDLDALKGWPERVRTMQANWIGRSEGAEISFNVEGAQNQTITVFTTRPDTLAGASYVVLAPENELVDSLSSEEQKDTVEAFRKEVARLSTIERTCDDRPKRGVPIGSHVINPLTGVVLPVWIADYVLAEYGTGAVMGVPAHDQRDIAFAQSNGLPIQQVIDAEGAAEAIAAGQAWTDAGTLVNSGSFDGTASSEAKGAITGHGAEQGWARSKVTYRLRDWLISRQRYWGCPIPVIHCDNCGAVPVPREDLPVELPRGIDLSGKGGSPLSQQSDWVNVACPRCGKPAKRETDTMDTFMCSSWYFLRFADPHNTEKPFSKEAVNRWLPVKQYVGGIEHAILHLLYARFFTKALKDRGLIDINEPFERLLTQGMVQGVTYRNATTGKYIAPADVADAEDPRDPNTGDKLEVLFEKMSKSKYNGVDPAAVIDRYGADTARMFILFKAPPEKDLEWDDADVEGQFRFLQRLWRLVEAGSARIDSLEPMQRPADLSDADSDVRRALHLAIEAVSEDLSDEIQLNTAISELMKLSNAISSTGIDALSAPVLQEALSGLVRLLAPFAPHLAEEFWNRLGGSGSVHRQSWPVLDPTALVQDSVEVVIQVKGKVRGKLQVPASAGKEELERLALASDVAEKWLEGAAPRRVIVVPGKLVNLVP.

A compositionally biased stretch (polar residues) spans 1-20 (MPSAGSVNAANPAVDTSAQT). The interval 1–22 (MPSAGSVNAANPAVDTSAQTGR) is disordered. The 'HIGH' region signature appears at 60-70 (PYPSGSLHMGH). Positions 634–638 (KMSKS) match the 'KMSKS' region motif. K637 serves as a coordination point for ATP.

Belongs to the class-I aminoacyl-tRNA synthetase family.

It localises to the cytoplasm. The catalysed reaction is tRNA(Leu) + L-leucine + ATP = L-leucyl-tRNA(Leu) + AMP + diphosphate. In Synechococcus sp. (strain CC9605), this protein is Leucine--tRNA ligase.